We begin with the raw amino-acid sequence, 511 residues long: Cytochrome P450 89A9 (511 aa).

A helical; Signal-anchor for type II membrane protein transmembrane segment spans residues 6 to 26; that stretch reads IIFLIISSLTFSIFLKLIFFF. Cysteine 454 is a binding site for heme.

The protein belongs to the cytochrome P450 family. Requires heme as cofactor.

The protein resides in the endoplasmic reticulum membrane. The enzyme catalyses primary fluorescent chlorophyll catabolite + reduced [NADPH--hemoprotein reductase] + O2 = primary fluorescent dioxobilin-type chlorophyll catabolite + formate + oxidized [NADPH--hemoprotein reductase] + 2 H(+). Its pathway is porphyrin-containing compound metabolism; chlorophyll degradation. Involved in the chlorophyll breakdown by its action in nonpolar primary fluorescent chlorophyll catabolite (pFCC) decarbonylation. Involved in the formation of major chlorophyll breakdown products, including non-fluorescent dioxobilin-type chlorophyll catabolites (NDCCs), during leaf senescence. This Arabidopsis thaliana (Mouse-ear cress) protein is Cytochrome P450 89A9.